Here is a 189-residue protein sequence, read N- to C-terminus: Lumazine protein (189 aa).

2 Lumazine-binding repeats span residues 1–96 (MFKG…LGKG) and 97–189 (ALTG…SNEW).

Requires 6,7-dimethyl-8-(1-D-ribityl)lumazine as cofactor.

In terms of biological role, antenna protein that modulates the color of the bioluminescence emission of the luciferase. In the presence of LumP, luciferase emission is shifted to higher energy values (shorter wavelength). This chain is Lumazine protein (luxL), found in Photobacterium phosphoreum.